Consider the following 474-residue polypeptide: MSRLVVVSNRIAPPDDKKSSAGGLAVGILGALKAAGGLWFGWSGEIGNEDAPLKKVTRDNITWASFNLSEQDHDQYYNQFSNGVLWPAFHYRLDLVNFQREAWEGYLRVNSLLADKLKPLIEPDDNLWIHDYHLLPFASELRKRGVNNRIGFFLHIPFPTPEIFNALPTNTELLEQLCDYDLLGFQTENDRTAFLDCLAMQTHLSTSSDGEYTAYGKTFRTEVYPIGIEPEEIAQASAGPLPPKLAQLKAELASVKNIFSVERLDYSKGLPERFQAFETLLEKYPEHHGKIRYTQIAPTSRGDVQAYQDIRHQLETEAGRINGKYGQLGWTPLYYLNQHFDRKLLMKVFRYSDVGLVTPLRDGMNLVAKEYVAAQDPKNPGVLVLSQFAGAANELTAALLVNPYDRDDVAAALDRALKMPLAERIARHSEMLEIVRKNDINHWQEAFIKDLKQVTPRSPERELQNKVATFPKLA.

R10 provides a ligand contact to D-glucose 6-phosphate. 22–23 (GG) serves as a coordination point for UDP-alpha-D-glucose. Positions 77 and 131 each coordinate D-glucose 6-phosphate. Positions 263 and 268 each coordinate UDP-alpha-D-glucose. R301 contacts D-glucose 6-phosphate. UDP-alpha-D-glucose contacts are provided by residues F340 and 366 to 370 (LVAKE).

The protein belongs to the glycosyltransferase 20 family. As to quaternary structure, homotetramer.

The catalysed reaction is D-glucose 6-phosphate + UDP-alpha-D-glucose = alpha,alpha-trehalose 6-phosphate + UDP + H(+). Its pathway is glycan biosynthesis; trehalose biosynthesis. Functionally, probably involved in the osmoprotection via the biosynthesis of trehalose. Catalyzes the transfer of glucose from UDP-alpha-D-glucose (UDP-Glc) to D-glucose 6-phosphate (Glc-6-P) to form trehalose-6-phosphate. Acts with retention of the anomeric configuration of the UDP-sugar donor. This chain is Trehalose-6-phosphate synthase, found in Cronobacter sakazakii (strain ATCC BAA-894) (Enterobacter sakazakii).